The chain runs to 207 residues: Large ribosomal subunit protein uL4 (207 aa).

The disordered stretch occupies residues 49–78 (HAVKNRSAVRGGGKKPWRQKGTGRARQGSI). Residues 60-71 (GGKKPWRQKGTG) show a composition bias toward basic residues.

The protein belongs to the universal ribosomal protein uL4 family. As to quaternary structure, part of the 50S ribosomal subunit.

Functionally, one of the primary rRNA binding proteins, this protein initially binds near the 5'-end of the 23S rRNA. It is important during the early stages of 50S assembly. It makes multiple contacts with different domains of the 23S rRNA in the assembled 50S subunit and ribosome. Forms part of the polypeptide exit tunnel. This is Large ribosomal subunit protein uL4 from Ligilactobacillus salivarius (strain UCC118) (Lactobacillus salivarius).